The following is a 134-amino-acid chain: MQARVKWVEGLTFLGESASGHQILMDGNSGDKAPSPMEMVLMAAGGCSAIDVVSILQKGRQDVVDCEVKLTSERREEAPRLFTHINLHFIVTGRDLKDAAVARAVDLSAEKYCSVALMLEKAVNITHSYEVVAA.

This is Protein YhfA (yhfA) from Escherichia coli O157:H7.